The following is a 236-amino-acid chain: 1-(5-phosphoribosyl)-5-[(5-phosphoribosylamino)methylideneamino] imidazole-4-carboxamide isomerase (236 aa).

Residue Asp-8 is the Proton acceptor of the active site. The active-site Proton donor is Asp-127.

It belongs to the HisA/HisF family.

The protein localises to the cytoplasm. The enzyme catalyses 1-(5-phospho-beta-D-ribosyl)-5-[(5-phospho-beta-D-ribosylamino)methylideneamino]imidazole-4-carboxamide = 5-[(5-phospho-1-deoxy-D-ribulos-1-ylimino)methylamino]-1-(5-phospho-beta-D-ribosyl)imidazole-4-carboxamide. It functions in the pathway amino-acid biosynthesis; L-histidine biosynthesis; L-histidine from 5-phospho-alpha-D-ribose 1-diphosphate: step 4/9. The protein is 1-(5-phosphoribosyl)-5-[(5-phosphoribosylamino)methylideneamino] imidazole-4-carboxamide isomerase of Campylobacter hominis (strain ATCC BAA-381 / DSM 21671 / CCUG 45161 / LMG 19568 / NCTC 13146 / CH001A).